The following is a 434-amino-acid chain: Adenylosuccinate synthetase (434 aa).

Residues 22–28 (GDEGKGK) and 50–52 (GHT) contribute to the GTP site. Asp23 (proton acceptor) is an active-site residue. 2 residues coordinate Mg(2+): Asp23 and Gly50. Residues 23–26 (DEGK), 48–51 (NAGH), Thr139, Arg153, Gln234, Thr249, and Arg313 contribute to the IMP site. The active-site Proton donor is His51. 309 to 315 (ATTGRKR) is a substrate binding site. Residues Arg315, 341–343 (KLD), and 423–425 (SVG) contribute to the GTP site.

Belongs to the adenylosuccinate synthetase family. As to quaternary structure, homodimer. It depends on Mg(2+) as a cofactor.

The protein localises to the cytoplasm. It carries out the reaction IMP + L-aspartate + GTP = N(6)-(1,2-dicarboxyethyl)-AMP + GDP + phosphate + 2 H(+). It functions in the pathway purine metabolism; AMP biosynthesis via de novo pathway; AMP from IMP: step 1/2. Its function is as follows. Plays an important role in the de novo pathway of purine nucleotide biosynthesis. Catalyzes the first committed step in the biosynthesis of AMP from IMP. The chain is Adenylosuccinate synthetase from Chlorobium chlorochromatii (strain CaD3).